Reading from the N-terminus, the 278-residue chain is Ribosomal RNA small subunit methyltransferase A (278 aa).

Residues Asn-18, Leu-20, Gly-45, Glu-66, Asp-89, and Asn-110 each contribute to the S-adenosyl-L-methionine site.

It belongs to the class I-like SAM-binding methyltransferase superfamily. rRNA adenine N(6)-methyltransferase family. RsmA subfamily.

The protein localises to the cytoplasm. It carries out the reaction adenosine(1518)/adenosine(1519) in 16S rRNA + 4 S-adenosyl-L-methionine = N(6)-dimethyladenosine(1518)/N(6)-dimethyladenosine(1519) in 16S rRNA + 4 S-adenosyl-L-homocysteine + 4 H(+). In terms of biological role, specifically dimethylates two adjacent adenosines (A1518 and A1519) in the loop of a conserved hairpin near the 3'-end of 16S rRNA in the 30S particle. May play a critical role in biogenesis of 30S subunits. This is Ribosomal RNA small subunit methyltransferase A from Cupriavidus pinatubonensis (strain JMP 134 / LMG 1197) (Cupriavidus necator (strain JMP 134)).